The sequence spans 98 residues: Small ribosomal subunit protein eS24 (98 aa).

Belongs to the eukaryotic ribosomal protein eS24 family.

This chain is Small ribosomal subunit protein eS24, found in Thermococcus gammatolerans (strain DSM 15229 / JCM 11827 / EJ3).